The sequence spans 251 residues: Ubiquinone/menaquinone biosynthesis C-methyltransferase UbiE (251 aa).

S-adenosyl-L-methionine is bound by residues Thr-74, Asp-95, and 123–124 (NA).

It belongs to the class I-like SAM-binding methyltransferase superfamily. MenG/UbiE family.

The enzyme catalyses a 2-demethylmenaquinol + S-adenosyl-L-methionine = a menaquinol + S-adenosyl-L-homocysteine + H(+). It carries out the reaction a 2-methoxy-6-(all-trans-polyprenyl)benzene-1,4-diol + S-adenosyl-L-methionine = a 5-methoxy-2-methyl-3-(all-trans-polyprenyl)benzene-1,4-diol + S-adenosyl-L-homocysteine + H(+). Its pathway is quinol/quinone metabolism; menaquinone biosynthesis; menaquinol from 1,4-dihydroxy-2-naphthoate: step 2/2. It functions in the pathway cofactor biosynthesis; ubiquinone biosynthesis. In terms of biological role, methyltransferase required for the conversion of demethylmenaquinol (DMKH2) to menaquinol (MKH2) and the conversion of 2-polyprenyl-6-methoxy-1,4-benzoquinol (DDMQH2) to 2-polyprenyl-3-methyl-6-methoxy-1,4-benzoquinol (DMQH2). This Shewanella baltica (strain OS223) protein is Ubiquinone/menaquinone biosynthesis C-methyltransferase UbiE.